A 324-amino-acid chain; its full sequence is ATP-dependent 6-phosphofructokinase (324 aa).

Gly-15 contributes to the ATP binding site. An ADP-binding site is contributed by 25–29 (RGVVR). ATP is bound by residues 76 to 77 (RF) and 106 to 109 (GDGS). Asp-107 provides a ligand contact to Mg(2+). 130–132 (TID) lines the substrate pocket. Asp-132 serves as the catalytic Proton acceptor. Arg-159 lines the ADP pocket. Residues Arg-167 and 174-176 (MGR) each bind substrate. Residues 190-192 (GCE), Lys-216, and 218-220 (KRH) each bind ADP. Substrate is bound by residues Glu-227, Arg-248, and 254–257 (HIQR).

The protein belongs to the phosphofructokinase type A (PFKA) family. ATP-dependent PFK group I subfamily. Prokaryotic clade 'B1' sub-subfamily. As to quaternary structure, homotetramer. Mg(2+) serves as cofactor.

It is found in the cytoplasm. The enzyme catalyses beta-D-fructose 6-phosphate + ATP = beta-D-fructose 1,6-bisphosphate + ADP + H(+). It functions in the pathway carbohydrate degradation; glycolysis; D-glyceraldehyde 3-phosphate and glycerone phosphate from D-glucose: step 3/4. With respect to regulation, allosterically activated by ADP and other diphosphonucleosides, and allosterically inhibited by phosphoenolpyruvate. Catalyzes the phosphorylation of D-fructose 6-phosphate to fructose 1,6-bisphosphate by ATP, the first committing step of glycolysis. The chain is ATP-dependent 6-phosphofructokinase from Haemophilus ducreyi (strain 35000HP / ATCC 700724).